A 654-amino-acid polypeptide reads, in one-letter code: MEVAMVSAESSGCNSHMPYGYAAQARARERERLAHSRAAAAAAVAAATAAVEGSGGSGGGSHHHHQSRGACTSHDPQGGRGSRRRRRQRPEKKKAHHRQSSFPHCSDLMPSGSEEKILRELSEEEEEEEDEEEEEEEGRFYYSEDDHGDECSYTDLLPQDDGGGGGYSSVRYSDCCERVVINVSGLRFETQMKTLAQFPETLLGDPEKRTQYFDPLRNEYFFDRNRPSFDAILYYYQSGGRLKRPVNVPFDIFTEEVKFYQLGEEALLKFREDEGFVREEEDRALPENEFKKQIWLLFEYPESSSPARGIAIVSVLVILISIVIFCLETLPEFRDDRDLIMALSAGGHSGLLNDTSAPHLENSGHTIFNDPFFIVETVCIVWFSFEFVVRCFACPSQALFFKNIMNIIDIVSILPYFITLGTDLAQQQGGGNGQQQQAMSFAILRIIRLVRVFRIFKLSRHSKGLQILGHTLRASMRELGLLIFFLFIGVILFSSAVYFAEADEPTTHFQSIPDAFWWAVVTMTTVGYGDMKPITVGGKIVGSLCAIAGVLTIALPVPVIVSNFNYFYHRETENEEQTQLTQNAVSCPYLPSNLLKKFRSSTSSSLGDKSEYLEMEEGVKESLCAKEGKCQGKGDDSETDKNNCSNAKAVETDV.

At 1–305 (MEVAMVSAES…LLFEYPESSS (305 aa)) the chain is on the cytoplasmic side. Residues 39 to 52 (AAAAAVAAATAAVE) are compositionally biased toward low complexity. A disordered region spans residues 39 to 146 (AAAAAVAAAT…EGRFYYSEDD (108 aa)). The segment covering 81-99 (GSRRRRRQRPEKKKAHHRQ) has biased composition (basic residues). Phosphoserine is present on Ser122. The span at 122 to 137 (SEEEEEEEDEEEEEEE) shows a compositional bias: acidic residues. Residues 306-327 (PARGIAIVSVLVILISIVIFCL) form a helical membrane-spanning segment. Over 328–371 (ETLPEFRDDRDLIMALSAGGHSGLLNDTSAPHLENSGHTIFNDP) the chain is Extracellular. N-linked (GlcNAc...) asparagine glycosylation is present at Asn353. The helical transmembrane segment at 372–393 (FFIVETVCIVWFSFEFVVRCFA) threads the bilayer. Over 394–404 (CPSQALFFKNI) the chain is Cytoplasmic. A helical transmembrane segment spans residues 405–425 (MNIIDIVSILPYFITLGTDLA). Topologically, residues 426–440 (QQQGGGNGQQQQAMS) are extracellular. Residues 441-461 (FAILRIIRLVRVFRIFKLSRH) form a helical; Voltage-sensor membrane-spanning segment. Over 462–476 (SKGLQILGHTLRASM) the chain is Cytoplasmic. The S4-S5 linker stretch occupies residues 463-476 (KGLQILGHTLRASM). A helical transmembrane segment spans residues 477–498 (RELGLLIFFLFIGVILFSSAVY). Residues 499 to 512 (FAEADEPTTHFQSI) are Extracellular-facing. The helical intramembrane region spans 513–524 (PDAFWWAVVTMT). Residues 525-530 (TVGYGD) carry the Selectivity filter motif. Residues 525 to 532 (TVGYGDMK) lie within the membrane without spanning it. At 533-539 (PITVGGK) the chain is on the extracellular side. Residues 540–568 (IVGSLCAIAGVLTIALPVPVIVSNFNYFY) traverse the membrane as a helical segment. Over 569-654 (HRETENEEQT…SNAKAVETDV (86 aa)) the chain is Cytoplasmic. Ser600 carries the phosphoserine; by PKA modification. Residues 630–641 (CQGKGDDSETDK) show a composition bias toward basic and acidic residues. The tract at residues 630–654 (CQGKGDDSETDKNNCSNAKAVETDV) is disordered. Residues 652–654 (TDV) carry the PDZ-binding motif.

This sequence belongs to the potassium channel family. A (Shaker) (TC 1.A.1.2) subfamily. Kv1.4/KCNA4 sub-subfamily. Homotetramer and heterotetramer of potassium channel proteins. Interacts with KCNAB1 and KCNAB2. Interacts with DLG1, DLG2 and DLG4 via their PDZ domains. Interacts with SIGMAR1. Detected in a complex with KCNA1. Interacts with KCNA2. Part of a complex containing KCNA1, KCNAB1 and LGI1. Interacts (via cytoplasmic N-terminal domain) with KCNRG. In terms of tissue distribution, detectable in brain, atrium, left and right ventricle, and kidney, but not in skeletal muscle, endothelial cells, aorta, and liver.

It is found in the cell membrane. The protein resides in the cell projection. The protein localises to the axon. It catalyses the reaction K(+)(in) = K(+)(out). Its function is as follows. Voltage-gated potassium channel that mediates transmembrane potassium transport in excitable membranes. Forms tetrameric potassium-selective channels through which potassium ions pass in accordance with their electrochemical gradient. The channel alternates between opened and closed conformations in response to the voltage difference across the membrane. Can form functional homotetrameric channels and heterotetrameric channels that contain variable proportions of KCNA1, KCNA2, KCNA4, KCNA5, and possibly other family members as well; channel properties depend on the type of alpha subunits that are part of the channel. Channel properties are modulated by cytoplasmic beta subunits that regulate the subcellular location of the alpha subunits and promote rapid inactivation. In vivo, membranes probably contain a mixture of heteromeric potassium channel complexes, making it difficult to assign currents observed in intact tissues to any particular potassium channel family member. Homotetrameric KCNA4 forms a potassium channel that opens in response to membrane depolarization, followed by rapid spontaneous channel closure. Likewise, a heterotetrameric channel formed by KCNA1 and KCNA4 shows rapid inactivation. This Mustela putorius furo (European domestic ferret) protein is Potassium voltage-gated channel subfamily A member 4 (KCNA4).